A 493-amino-acid chain; its full sequence is 3-octaprenyl-4-hydroxybenzoate carboxy-lyase (493 aa).

Position 177 (Asn177) interacts with Mn(2+). Residues 180–182, 194–196, and 199–200 each bind prenylated FMN; these read IYR, RWL, and RG. Glu243 lines the Mn(2+) pocket. Catalysis depends on Asp292, which acts as the Proton donor.

This sequence belongs to the UbiD family. In terms of assembly, homohexamer. Requires prenylated FMN as cofactor. Mn(2+) serves as cofactor.

It is found in the cell membrane. It catalyses the reaction a 4-hydroxy-3-(all-trans-polyprenyl)benzoate + H(+) = a 2-(all-trans-polyprenyl)phenol + CO2. Its pathway is cofactor biosynthesis; ubiquinone biosynthesis. Catalyzes the decarboxylation of 3-octaprenyl-4-hydroxy benzoate to 2-octaprenylphenol, an intermediate step in ubiquinone biosynthesis. This Colwellia psychrerythraea (strain 34H / ATCC BAA-681) (Vibrio psychroerythus) protein is 3-octaprenyl-4-hydroxybenzoate carboxy-lyase.